Here is a 346-residue protein sequence, read N- to C-terminus: KH domain-containing, RNA-binding, signal transduction-associated protein 3 (346 aa).

The segment at methionine 1 to asparagine 160 is involved in homodimerization. Lysine 4 participates in a covalent cross-link: Glycyl lysine isopeptide (Lys-Gly) (interchain with G-Cter in SUMO2). Residues leucine 61–leucine 127 enclose the KH domain. Disordered regions lie at residues arginine 212–tyrosine 266 and glycine 317–tyrosine 346. The segment covering glycine 253–threonine 262 has biased composition (pro residues).

It belongs to the KHDRBS family. In terms of assembly, self-associates to form homooligomers; dimerization increases RNA affinity. Interacts with KHDRBS2/SLM-1. Interacts with KHDRBS1/SAM68; heterooligomer formation of KHDRBS family proteins may modulate RNA substrate specificity. Interacts with the splicing regulatory proteins SFRS9, SAFB and YTHDC1. Interacts with HNRPL, RBMX, p85 subunit of PI3-kinase, SERPINB5. Post-translationally, phosphorylated on tyrosine residues by PTK6. Highly expressed in testis and brain. In adult cerebellum expressed predominantly in internal granular layer interneurons and in hippocampus is exclusively expressed in CA neurons; expression is restricted to neuronal subpopulations largely non-overlapping with expression of KHDRBS2/SLM-1.

Its subcellular location is the nucleus. Functionally, RNA-binding protein that plays a role in the regulation of alternative splicing and influences mRNA splice site selection and exon inclusion. Binds preferentially to the 5'-[AU]UAAA-3' motif in vitro. Binds optimally to RNA containing 5'-[AU]UAA-3' as a bipartite motif spaced by more than 15 nucleotides. Binds poly(A). RNA-binding abilities are down-regulated by tyrosine kinase PTK6. Involved in splice site selection of vascular endothelial growth factor. In vitro regulates CD44 alternative splicing by direct binding to purine-rich exonic enhancer. Can regulate alternative splicing of neurexins NRXN1-3 in the laminin G-like domain 6 containing the evolutionary conserved neurexin alternative spliced segment 4 (AS4) involved in neurexin selective targeting to postsynaptic partners such as neuroligins and LRRTM family members. High concentrations in forebrain structures block splicing inclusion of NRXN1-3 AS4 exons while low concentrations favor their inclusion. Targeted, cell-type specific splicing regulation of NRXN1 at AS4 is involved in neuronal glutamatergic synapse function and plasticity and is linked to behavioral aspects. Regulates expression of KHDRBS2/SLIM-1 in defined neuron populations in the hippocampus by modifying its alternative splicing resulting in a transcript predicted to undergo nonsense-mediated decay. Can bind FABP9 mRNA. May play a role as a negative regulator of cell growth. Inhibits cell proliferation. This chain is KH domain-containing, RNA-binding, signal transduction-associated protein 3 (Khdrbs3), found in Mus musculus (Mouse).